Reading from the N-terminus, the 396-residue chain is Flap endonuclease 1 (396 aa).

The tract at residues 1 to 104 (MGIKHLYQLI…GELAKRFQRK (104 aa)) is N-domain. Residue aspartate 34 coordinates Mg(2+). The DNA site is built by arginine 47 and arginine 70. Residues aspartate 86, glutamate 158, glutamate 160, aspartate 179, and aspartate 181 each coordinate Mg(2+). Residues 122–255 (DVEKFSRRTV…STALKLIRDH (134 aa)) are I-domain. Glutamate 158 is a binding site for DNA. DNA is bound by residues glycine 233 and aspartate 235. Aspartate 235 contributes to the Mg(2+) binding site. Positions 338 to 396 (MKSAQQSRLEGFFKPVERTPEEKASLKRKADEKLSEKKKKQKEEAKAKKQAKSKPRTAG) are disordered. The tract at residues 342 to 350 (QQSRLEGFF) is interaction with PCNA. Residues 352-384 (PVERTPEEKASLKRKADEKLSEKKKKQKEEAKA) show a composition bias toward basic and acidic residues. Residues 385–396 (KKQAKSKPRTAG) show a composition bias toward basic residues.

It belongs to the XPG/RAD2 endonuclease family. FEN1 subfamily. As to quaternary structure, interacts with PCNA. Three molecules of FEN1 bind to one PCNA trimer with each molecule binding to one PCNA monomer. PCNA stimulates the nuclease activity without altering cleavage specificity. It depends on Mg(2+) as a cofactor. Post-translationally, phosphorylated. Phosphorylation upon DNA damage induces relocalization to the nuclear plasma.

It is found in the nucleus. It localises to the nucleolus. Its subcellular location is the nucleoplasm. The protein localises to the mitochondrion. Its function is as follows. Structure-specific nuclease with 5'-flap endonuclease and 5'-3' exonuclease activities involved in DNA replication and repair. During DNA replication, cleaves the 5'-overhanging flap structure that is generated by displacement synthesis when DNA polymerase encounters the 5'-end of a downstream Okazaki fragment. It enters the flap from the 5'-end and then tracks to cleave the flap base, leaving a nick for ligation. Also involved in the long patch base excision repair (LP-BER) pathway, by cleaving within the apurinic/apyrimidinic (AP) site-terminated flap. Acts as a genome stabilization factor that prevents flaps from equilibrating into structures that lead to duplications and deletions. Also possesses 5'-3' exonuclease activity on nicked or gapped double-stranded DNA, and exhibits RNase H activity. Also involved in replication and repair of rDNA and in repairing mitochondrial DNA. The polypeptide is Flap endonuclease 1 (Phaeosphaeria nodorum (strain SN15 / ATCC MYA-4574 / FGSC 10173) (Glume blotch fungus)).